Consider the following 353-residue polypeptide: Photosystem II D2 protein (353 aa).

T2 carries the post-translational modification N-acetylthreonine. A Phosphothreonine modification is found at T2. Residues 41–61 (CAYFALGGWFTGTTFVTSWYT) traverse the membrane as a helical segment. H118 serves as a coordination point for chlorophyll a. A helical membrane pass occupies residues 125–141 (GFMLRQFELARSVQLRP). Pheophytin a-binding residues include Q130 and N143. A helical membrane pass occupies residues 153–166 (VFVSVFLIYPLGQS). Residue H198 coordinates chlorophyll a. Residues 208–228 (AALLCAIHGATVENTLFEDGD) form a helical membrane-spanning segment. A plastoquinone is bound by residues H215 and F262. H215 lines the Fe cation pocket. H269 serves as a coordination point for Fe cation. The helical transmembrane segment at 279–295 (GLWMSAIGVVGLALNLR) threads the bilayer.

This sequence belongs to the reaction center PufL/M/PsbA/D family. PSII is composed of 1 copy each of membrane proteins PsbA, PsbB, PsbC, PsbD, PsbE, PsbF, PsbH, PsbI, PsbJ, PsbK, PsbL, PsbM, PsbT, PsbX, PsbY, PsbZ, Psb30/Ycf12, at least 3 peripheral proteins of the oxygen-evolving complex and a large number of cofactors. It forms dimeric complexes. Requires The D1/D2 heterodimer binds P680, chlorophylls that are the primary electron donor of PSII, and subsequent electron acceptors. It shares a non-heme iron and each subunit binds pheophytin, quinone, additional chlorophylls, carotenoids and lipids. There is also a Cl(-1) ion associated with D1 and D2, which is required for oxygen evolution. The PSII complex binds additional chlorophylls, carotenoids and specific lipids. as cofactor.

Its subcellular location is the plastid. It localises to the chloroplast thylakoid membrane. The catalysed reaction is 2 a plastoquinone + 4 hnu + 2 H2O = 2 a plastoquinol + O2. Its function is as follows. Photosystem II (PSII) is a light-driven water:plastoquinone oxidoreductase that uses light energy to abstract electrons from H(2)O, generating O(2) and a proton gradient subsequently used for ATP formation. It consists of a core antenna complex that captures photons, and an electron transfer chain that converts photonic excitation into a charge separation. The D1/D2 (PsbA/PsbD) reaction center heterodimer binds P680, the primary electron donor of PSII as well as several subsequent electron acceptors. D2 is needed for assembly of a stable PSII complex. This chain is Photosystem II D2 protein, found in Welwitschia mirabilis (Tree tumbo).